The chain runs to 455 residues: Argininosuccinate lyase (455 aa).

The protein belongs to the lyase 1 family. Argininosuccinate lyase subfamily.

It localises to the cytoplasm. The enzyme catalyses 2-(N(omega)-L-arginino)succinate = fumarate + L-arginine. It functions in the pathway amino-acid biosynthesis; L-arginine biosynthesis; L-arginine from L-ornithine and carbamoyl phosphate: step 3/3. This is Argininosuccinate lyase from Shewanella sp. (strain MR-4).